The primary structure comprises 189 residues: ATP-dependent protease subunit HslV (189 aa).

Thr12 is an active-site residue. Residues Ala172, Cys175, and Thr178 each contribute to the Na(+) site.

The protein belongs to the peptidase T1B family. HslV subfamily. In terms of assembly, a double ring-shaped homohexamer of HslV is capped on each side by a ring-shaped HslU homohexamer. The assembly of the HslU/HslV complex is dependent on binding of ATP.

Its subcellular location is the cytoplasm. It carries out the reaction ATP-dependent cleavage of peptide bonds with broad specificity.. With respect to regulation, allosterically activated by HslU binding. In terms of biological role, protease subunit of a proteasome-like degradation complex believed to be a general protein degrading machinery. In Ehrlichia ruminantium (strain Welgevonden), this protein is ATP-dependent protease subunit HslV.